We begin with the raw amino-acid sequence, 1434 residues long: DNA-directed RNA polymerase subunit beta (1434 aa).

It belongs to the RNA polymerase beta chain family. As to quaternary structure, the RNAP catalytic core consists of 2 alpha, 1 beta, 1 beta' and 1 omega subunit. When a sigma factor is associated with the core the holoenzyme is formed, which can initiate transcription.

It carries out the reaction RNA(n) + a ribonucleoside 5'-triphosphate = RNA(n+1) + diphosphate. DNA-dependent RNA polymerase catalyzes the transcription of DNA into RNA using the four ribonucleoside triphosphates as substrates. The protein is DNA-directed RNA polymerase subunit beta of Ureaplasma urealyticum serovar 10 (strain ATCC 33699 / Western).